A 760-amino-acid chain; its full sequence is MGDRSGVGGEEGEKSVLGASAHSQAGRRQQHTPAARRGAQRAPAATAAAASRPVFAMRWCCGGSYSENGGGGGGSRGAPPTPLLTVAATSSSTAHDTFGPMQVKMLKTAVIVTEGTGESVLLDSLRASGWICTVSFPTQATSDVESICPLAVFIDLRVPHPSQIAKDVSSVSTEEVLIVSIAEKHISEKRRRALAQSNIIHHVTWNTRDVVLFDYVGRLANRIRALPALFAVLDETDQAVEICDEQRVVQYVNRAYENVTGCIRSEVIGQPESEMRRKSLPRARGEEERRRSCDWKFIRVPFANNSQFVYMKRSNTTGDTAAIFRDVSLKSLKSQTGGIEAPISEVLTMLRDVSARVDGEPAQTIKDAMKVLSSHELYAPSINRFRDADRIATQYYDGLIRLHHPARQRKRSVVDAHREKRGSHGERRRVSADVKNALENDNCWKFDILHLEKVSDHHALSQVGMKVFERWKVCDVLGCSDDLLHRWILSIEAHYHAGNTYHNATHAADVLQATSFFLDSPSVAVHVNESHAVAALLAAAVHDLDHPGRGNAYLINTRQSLAILYNDNSILENHHIALAFQLTLQHNANVNIFSSLSREEFIQMRHAMVEMVLATDISRHFEYLAKFNKMHVTDVPEEQRDTNSLTICDMLVKCADISNPAREWGLCQRWAHRIVEEYFEQTREEKEKGLPVTMEVFDRNTCNVPITQCGFIDMFAREAFATFTEFAKLGELSDQLESNYEKWKVMTSQWTPTHNTNLVL.

Disordered stretches follow at residues 1-47 (MGDR…AATA) and 410-429 (KRSV…ERRR). Residues 33-47 (PAARRGAQRAPAATA) are compositionally biased toward low complexity. A compositionally biased stretch (basic and acidic residues) spans 412–429 (SVVDAHREKRGSHGERRR). In terms of domain architecture, PDEase spans 426-750 (ERRRVSADVK…EKWKVMTSQW (325 aa)). The active-site Proton donor is the His-502. Residues His-506, His-542, Asp-543, and Asp-656 each coordinate a divalent metal cation.

This sequence belongs to the cyclic nucleotide phosphodiesterase family. It depends on a divalent metal cation as a cofactor.

The catalysed reaction is a nucleoside 3',5'-cyclic phosphate + H2O = a nucleoside 5'-phosphate + H(+). In Caenorhabditis elegans, this protein is Probable 3',5'-cyclic phosphodiesterase pde-6 (pde-6).